The following is a 471-amino-acid chain: ATP synthase subunit beta (471 aa).

153 to 160 (GGAGVGKT) provides a ligand contact to ATP.

This sequence belongs to the ATPase alpha/beta chains family. In terms of assembly, F-type ATPases have 2 components, CF(1) - the catalytic core - and CF(0) - the membrane proton channel. CF(1) has five subunits: alpha(3), beta(3), gamma(1), delta(1), epsilon(1). CF(0) has four main subunits: a(1), b(1), b'(1) and c(9-12).

It is found in the cell membrane. It carries out the reaction ATP + H2O + 4 H(+)(in) = ADP + phosphate + 5 H(+)(out). Its function is as follows. Produces ATP from ADP in the presence of a proton gradient across the membrane. The catalytic sites are hosted primarily by the beta subunits. The chain is ATP synthase subunit beta from Chloroflexus aurantiacus (strain ATCC 29364 / DSM 637 / Y-400-fl).